The following is a 291-amino-acid chain: rRNA 2'-O-methyltransferase fibrillarin (291 aa).

Composition is skewed to basic and acidic residues over residues 1 to 12 (MKKTNKRPDGRK) and 20 to 29 (FRSDKGEGRG). The interval 1–45 (MKKTNKRPDGRKFQKGGKPFRSDKGEGRGRMNNKKKGSVNAGLDR) is disordered. Asymmetric dimethylarginine occurs at positions 28 and 62. Residues 134-135 (TT), 153-154 (EF), 178-179 (DA), and 198-201 (DVSQ) contribute to the S-adenosyl-L-methionine site.

The protein belongs to the methyltransferase superfamily. Fibrillarin family. Component of box C/D small nucleolar ribonucleoprotein (snoRNP) particles.

It localises to the nucleus. It is found in the nucleolus. It catalyses the reaction L-glutaminyl-[histone H2A] + S-adenosyl-L-methionine = N(5)-methyl-L-glutaminyl-[histone H2A] + S-adenosyl-L-homocysteine + H(+). Functionally, S-adenosyl-L-methionine-dependent methyltransferase that has the ability to methylate both RNAs and proteins. Involved in pre-rRNA processing. Utilizes the methyl donor S-adenosyl-L-methionine to catalyze the site-specific 2'-hydroxyl methylation of ribose moieties in pre-ribosomal RNA. Site specificity is provided by a guide RNA that base pairs with the substrate. Methylation occurs at a characteristic distance from the sequence involved in base pairing with the guide RNA. Also acts as a protein methyltransferase by mediating methylation of 'Gln-105' of histone H2A (H2AQ105me), a modification that impairs binding of the FACT complex and is specifically present at 35S ribosomal DNA locus. The sequence is that of rRNA 2'-O-methyltransferase fibrillarin (NOP1) from Encephalitozoon cuniculi (strain GB-M1) (Microsporidian parasite).